The chain runs to 351 residues: Phenylalanine--tRNA ligase alpha subunit (351 aa).

Glu-276 provides a ligand contact to Mg(2+).

Belongs to the class-II aminoacyl-tRNA synthetase family. Phe-tRNA synthetase alpha subunit type 1 subfamily. In terms of assembly, tetramer of two alpha and two beta subunits. Mg(2+) serves as cofactor.

The protein resides in the cytoplasm. The catalysed reaction is tRNA(Phe) + L-phenylalanine + ATP = L-phenylalanyl-tRNA(Phe) + AMP + diphosphate + H(+). The polypeptide is Phenylalanine--tRNA ligase alpha subunit (Psychrobacter arcticus (strain DSM 17307 / VKM B-2377 / 273-4)).